A 294-amino-acid chain; its full sequence is tRNA dimethylallyltransferase (294 aa).

10-17 is a binding site for ATP; the sequence is GPTAVGKT. Residue 12–17 participates in substrate binding; it reads TAVGKT. Positions 35–38 are interaction with substrate tRNA; that stretch reads DSQQ.

Belongs to the IPP transferase family. As to quaternary structure, monomer. Mg(2+) is required as a cofactor.

The enzyme catalyses adenosine(37) in tRNA + dimethylallyl diphosphate = N(6)-dimethylallyladenosine(37) in tRNA + diphosphate. Functionally, catalyzes the transfer of a dimethylallyl group onto the adenine at position 37 in tRNAs that read codons beginning with uridine, leading to the formation of N6-(dimethylallyl)adenosine (i(6)A). The sequence is that of tRNA dimethylallyltransferase from Streptococcus pneumoniae (strain P1031).